Reading from the N-terminus, the 285-residue chain is MHPDNIHKDSYDFEALTESNPQLSEFVFQNKYGTQTINFANPEAVLQLNKALLKFHYQVENWSIPKQYLCPPIPGRADYIHYLNDLLSEENIQGEIRGIDIGVGANAIYPILASRIYDWKMLGTDIEEKSVAIAQANIETNPTIAKNIEIRHQEDRGSIFKGMIKKGEYYHFSICNPPFHASQEEANKATSRKFKNLGLEKGSALNFGGQANELWCNGGEALFIKRMIKESVLFKSQVGYFTSLVSKKENLPKIYKHLNKLKADFKTIEMGQGNKKSRIIAWKFD.

It belongs to the methyltransferase superfamily. METTL16/RlmF family.

The protein localises to the cytoplasm. The catalysed reaction is adenosine(1618) in 23S rRNA + S-adenosyl-L-methionine = N(6)-methyladenosine(1618) in 23S rRNA + S-adenosyl-L-homocysteine + H(+). Its function is as follows. Specifically methylates the adenine in position 1618 of 23S rRNA. In Christiangramia forsetii (strain DSM 17595 / CGMCC 1.15422 / KT0803) (Gramella forsetii), this protein is Ribosomal RNA large subunit methyltransferase F.